A 1085-amino-acid polypeptide reads, in one-letter code: Cell wall protein IFF6 (1085 aa).

The N-terminal stretch at 1–19 (MLLKQIFLPFFVLFNAINA) is a signal peptide. The interval 339-1060 (PSPGTDESSS…SSNSATIPEQ (722 aa)) is disordered. Residues 342–528 (GTDESSSLSS…QSSSGTGQSS (187 aa)) are compositionally biased toward low complexity. A compositionally biased stretch (acidic residues) spans 529-538 (TEDEPIDSTE). Residues 539–828 (SDTSSATDSS…TVTNTATNTG (290 aa)) show a composition bias toward low complexity. N-linked (GlcNAc...) asparagine glycans are attached at residues asparagine 659, asparagine 782, asparagine 854, asparagine 860, asparagine 864, asparagine 874, asparagine 882, asparagine 886, asparagine 890, asparagine 896, asparagine 900, asparagine 910, asparagine 924, asparagine 932, asparagine 938, asparagine 952, asparagine 960, asparagine 964, asparagine 968, asparagine 976, asparagine 980, asparagine 992, asparagine 996, asparagine 1008, and asparagine 1016. Over residues 847 to 1010 (NNGGGSNNGS…GSGSGSGNGS (164 aa)) the composition is skewed to gly residues. The span at 1018 to 1028 (SGSGSGSGNGQ) shows a compositional bias: gly residues. A compositionally biased stretch (low complexity) spans 1031 to 1052 (GIITSSIGQPGSSTSTQGPSSS). Asparagine 1062 is lipidated: GPI-anchor amidated asparagine. Positions 1063-1085 (SGNHIKFTLFNGLLIGLVPIVFM) are cleaved as a propeptide — removed in mature form.

This sequence belongs to the HYR1/IFF family. In terms of processing, the GPI-anchor is attached to the protein in the endoplasmic reticulum and serves to target the protein to the cell surface. There, the glucosamine-inositol phospholipid moiety is cleaved off and the GPI-modified mannoprotein is covalently attached via its lipidless GPI glycan remnant to the 1,6-beta-glucan of the outer cell wall layer.

It is found in the secreted. It localises to the cell wall. The protein resides in the membrane. Its function is as follows. GPI-anchored cell wall protein involved in cell wall organization, hyphal growth, as well as in host-fungal interaction and virulence. In Candida albicans (strain SC5314 / ATCC MYA-2876) (Yeast), this protein is Cell wall protein IFF6 (IFF6).